A 394-amino-acid chain; its full sequence is Protein DDI1 homolog 2 (394 aa).

A Ubiquitin-like domain is found at 1-81 (MLITVYCVRR…VILRQRETPE (81 aa)). The interval 82–128 (ARPAAPFPGLDFSTIAVPGSSSQPAPSQPQAPPPPPPDTSSFPQGLD) is disordered. A compositionally biased stretch (pro residues) spans 107-119 (PSQPQAPPPPPPD). Asp-247 is an active-site residue. Residues 371–390 (EEIADRELAEVLQKSAEEAD) carry the Ubiquitin-binding motif.

Belongs to the DDI1 family. As to quaternary structure, homodimer.

Its subcellular location is the cytoplasm. It localises to the cytosol. The protein resides in the chromosome. Functionally, aspartic protease that mediates the cleavage of NFE2L1/NRF1 at 'Leu-104', thereby promoting release of NFE2L1/NRF1 from the endoplasmic reticulum membrane. Ubiquitination of NFE2L1/NRF1 is a prerequisite for cleavage, suggesting that DDI2 specifically recognizes and binds ubiquitinated NFE2L1/NRF1. Seems to act as a proteasomal shuttle which links the proteasome and replication fork proteins like RTF2. Required for cellular survival following replication stress. In Xenopus tropicalis (Western clawed frog), this protein is Protein DDI1 homolog 2 (ddi2).